The primary structure comprises 185 residues: Pycsar effector protein EcPycTM (185 aa).

3 helical membrane passes run 32–52 (ALLL…VGYF), 63–83 (MVIF…SVLL), and 141–161 (FILS…VSWI).

The protein localises to the cell inner membrane. Pycsar (pyrimidine cyclase system for antiphage resistance) provides immunity against bacteriophage. The pyrimidine cyclase (PycC) synthesizes cyclic nucleotides in response to infection; these serve as specific second messenger signals. The signals activate the adjacent effector, leading to bacterial cell death and abortive phage infection. A clade E Pycsar system. Functionally, the effector component of a two-gene Pycsar system. Expression of this and adjacent cytidylate cyclase EcPycC (AC P0DV24) confers resistance to bacteriophage P1 and T5; this protein is required for resistance. When cells expressing the Pycsar system are infected by phage T5 at low multiplicity of infection (0.2 MOI) the culture survives, at 2.0 MOI bacteria enter growth arrest. The same cells enter growth arrest after exposure to 250 uM cCMP but not cUMP; this effector protein responds only to cCMP, usually produced by its cognate NTP cyclase. Some of the cells treated with cCMP have abnormal membrane protrusions, probably due to effects on membrane integrity. The chain is Pycsar effector protein EcPycTM from Escherichia coli.